A 184-amino-acid polypeptide reads, in one-letter code: ADP-ribosylation factor-like protein 2 (184 aa).

A lipid anchor (N-myristoyl glycine) is attached at Gly2. GTP-binding positions include 23–30 (GLDNAGKT), 66–70 (DVGGQ), Gly68, and 125–128 (NKSD).

The protein belongs to the small GTPase superfamily. Arf family.

It localises to the cytoplasm. Its subcellular location is the cell membrane. The protein localises to the cytoskeleton. The protein resides in the microtubule organizing center. It is found in the centrosome. Its function is as follows. GTP-binding protein that functions in embryogenesis, cytokinesis, germline development and microtubulule cytoskeleton dynamics. In Caenorhabditis briggsae, this protein is ADP-ribosylation factor-like protein 2 (evl-20.1).